The following is a 594-amino-acid chain: DNA mismatch repair protein MutL (594 aa).

The protein belongs to the DNA mismatch repair MutL/HexB family.

This protein is involved in the repair of mismatches in DNA. It is required for dam-dependent methyl-directed DNA mismatch repair. May act as a 'molecular matchmaker', a protein that promotes the formation of a stable complex between two or more DNA-binding proteins in an ATP-dependent manner without itself being part of a final effector complex. The sequence is that of DNA mismatch repair protein MutL from Tolumonas auensis (strain DSM 9187 / NBRC 110442 / TA 4).